Here is a 74-residue protein sequence, read N- to C-terminus: Putative defensin-like protein 128 (74 aa).

The N-terminal stretch at Met-1–Gly-24 is a signal peptide. Intrachain disulfides connect Cys-28–Cys-72, Cys-37–Cys-56, Cys-42–Cys-66, and Cys-46–Cys-68.

This sequence belongs to the DEFL family.

It localises to the secreted. The protein is Putative defensin-like protein 128 (LCR8) of Arabidopsis thaliana (Mouse-ear cress).